Here is a 183-residue protein sequence, read N- to C-terminus: Large ribosomal subunit protein uL5 (183 aa).

It belongs to the universal ribosomal protein uL5 family. Part of the 50S ribosomal subunit; part of the 5S rRNA/L5/L18/L25 subcomplex. Contacts the 5S rRNA and the P site tRNA. Forms a bridge to the 30S subunit in the 70S ribosome.

Functionally, this is one of the proteins that bind and probably mediate the attachment of the 5S RNA into the large ribosomal subunit, where it forms part of the central protuberance. In the 70S ribosome it contacts protein S13 of the 30S subunit (bridge B1b), connecting the 2 subunits; this bridge is implicated in subunit movement. Contacts the P site tRNA; the 5S rRNA and some of its associated proteins might help stabilize positioning of ribosome-bound tRNAs. The sequence is that of Large ribosomal subunit protein uL5 from Pseudothermotoga lettingae (strain ATCC BAA-301 / DSM 14385 / NBRC 107922 / TMO) (Thermotoga lettingae).